A 441-amino-acid polypeptide reads, in one-letter code: GTPase Der (441 aa).

EngA-type G domains are found at residues 4–169 and 178–353; these read PVVA…PDSS and PRVA…ENNS. GTP contacts are provided by residues 10–17, 57–61, 120–123, 184–191, 231–235, and 296–299; these read GRPNVGKS, DTGGI, NKVD, GKPNVGKS, DTAGL, and NKWD. Positions 354-438 constitute a KH-like domain; sequence MRVATGVLNE…ALKFITRERK (85 aa).

It belongs to the TRAFAC class TrmE-Era-EngA-EngB-Septin-like GTPase superfamily. EngA (Der) GTPase family. Associates with the 50S ribosomal subunit.

GTPase that plays an essential role in the late steps of ribosome biogenesis. This chain is GTPase Der, found in Agathobacter rectalis (strain ATCC 33656 / DSM 3377 / JCM 17463 / KCTC 5835 / VPI 0990) (Eubacterium rectale).